A 211-amino-acid polypeptide reads, in one-letter code: Pyridoxine/pyridoxamine 5'-phosphate oxidase (211 aa).

Substrate is bound by residues 7–10 and Lys-65; that span reads RRDY. Residues 60 to 65, 75 to 76, Arg-81, Lys-82, and Gln-104 each bind FMN; these read RIVLLK and YT. The substrate site is built by Tyr-122, Arg-126, and Ser-130. Residues 139 to 140 and Trp-184 each bind FMN; that span reads QS. A substrate-binding site is contributed by 190–192; the sequence is RLH. Position 194 (Arg-194) interacts with FMN.

Belongs to the pyridoxamine 5'-phosphate oxidase family. In terms of assembly, homodimer. FMN is required as a cofactor.

The catalysed reaction is pyridoxamine 5'-phosphate + O2 + H2O = pyridoxal 5'-phosphate + H2O2 + NH4(+). The enzyme catalyses pyridoxine 5'-phosphate + O2 = pyridoxal 5'-phosphate + H2O2. It functions in the pathway cofactor metabolism; pyridoxal 5'-phosphate salvage; pyridoxal 5'-phosphate from pyridoxamine 5'-phosphate: step 1/1. The protein operates within cofactor metabolism; pyridoxal 5'-phosphate salvage; pyridoxal 5'-phosphate from pyridoxine 5'-phosphate: step 1/1. Functionally, catalyzes the oxidation of either pyridoxine 5'-phosphate (PNP) or pyridoxamine 5'-phosphate (PMP) into pyridoxal 5'-phosphate (PLP). The protein is Pyridoxine/pyridoxamine 5'-phosphate oxidase of Aliivibrio fischeri (strain ATCC 700601 / ES114) (Vibrio fischeri).